We begin with the raw amino-acid sequence, 161 residues long: Anaerobic nitrite reductase Glb1-1 (161 aa).

The Globin domain occupies 8–157; that stretch reads CFTEEQEALV…LVGAIKSEMK (150 aa). Residues 41 to 45 carry the Homodimerization motif; that stretch reads EIAPS. 6 residues coordinate heme b: serine 51, lysine 65, histidine 69, lysine 99, threonine 103, and histidine 104. The short motif at 111–123 is the Homodimerization element; that stretch reads NEHFEVTKFALLD.

The protein belongs to the plant globin family. As to quaternary structure, homodimer. It depends on heme b as a cofactor. Mainly expressed in root nodules, and, to a lower extent, in leaves, roots, stems, flowers and fruits. Accumulates in mature root nodules.

The enzyme catalyses Fe(III)-heme b-[protein] + nitric oxide + H2O = Fe(II)-heme b-[protein] + nitrite + 2 H(+). In terms of biological role, phytoglobin that reduces nitrite to nitric oxide (NO) under anoxic conditions (e.g. during flooding or in waterlogged soil) and upon root nodulation. Required for general plant development and during nodulation, especially for the onset of symbiosis. Monitors nitric oxide (NO) levels during early phase of the nitrogen-fixing symbiosis and buffers oxygen in functioning nodules. May not function as an oxygen storage or transport protein. Has an unusually high affinity for O(2) through a hexacoordinate heme iron because of a very low dissociation constant. In Lotus japonicus (Lotus corniculatus var. japonicus), this protein is Anaerobic nitrite reductase Glb1-1.